We begin with the raw amino-acid sequence, 138 residues long: Acidic phospholipase A2 VP7 (138 aa).

Residues 1-16 (MRTLWIVAVCLMGVEG) form the signal peptide. Disulfide bonds link C42/C131, C44/C60, C59/C111, C65/C138, C66/C104, C73/C97, and C91/C102. Ca(2+) is bound by residues Y43, G45, and G47. H63 is a catalytic residue. D64 is a Ca(2+) binding site. Residue D105 is part of the active site.

It belongs to the phospholipase A2 family. Group II subfamily. D49 sub-subfamily. As to quaternary structure, does not form a complex. It depends on Ca(2+) as a cofactor. Expressed by the venom gland.

The protein localises to the secreted. The enzyme catalyses a 1,2-diacyl-sn-glycero-3-phosphocholine + H2O = a 1-acyl-sn-glycero-3-phosphocholine + a fatty acid + H(+). Its function is as follows. Snake venom phospholipase A2 (PLA2) that is not toxic by itself, but the synergistical mixture of a basic and this acidic protein is lethal. PLA2 catalyzes the calcium-dependent hydrolysis of the 2-acyl groups in 3-sn-phosphoglycerides. The chain is Acidic phospholipase A2 VP7 from Daboia palaestinae (Palestine viper).